An 865-amino-acid chain; its full sequence is AP-1 complex subunit gamma-1 (865 aa).

A disordered region spans residues Ala665–Ser690. Residues Met675–Ser690 show a composition bias toward polar residues. A GAE domain is found at Lys746 to Pro860.

It belongs to the adaptor complexes large subunit family. Adaptor protein complex 1 (AP-1) is a heterotetramer composed of two large adaptins (gamma-type subunit apl4 and beta-type subunit apl2), a medium adaptin (mu-type subunit apm1) and a small adaptin (sigma-type subunit aps1). AP-1 interacts with clathrin.

Its subcellular location is the cytoplasmic vesicle. The protein resides in the clathrin-coated vesicle membrane. It localises to the golgi apparatus. Functionally, adaptins are components of the adaptor complexes which link clathrin to receptors in coated vesicles. Clathrin-associated protein complexes are believed to interact with the cytoplasmic tails of membrane proteins, leading to their selection and concentration. The AP-1 complex interacts directly with clathrin. In Schizosaccharomyces pombe (strain 972 / ATCC 24843) (Fission yeast), this protein is AP-1 complex subunit gamma-1 (apl4).